A 121-amino-acid chain; its full sequence is Large ribosomal subunit protein bL12 (121 aa).

It belongs to the bacterial ribosomal protein bL12 family. As to quaternary structure, homodimer. Part of the ribosomal stalk of the 50S ribosomal subunit. Forms a multimeric L10(L12)X complex, where L10 forms an elongated spine to which 2 to 4 L12 dimers bind in a sequential fashion. Binds GTP-bound translation factors.

Forms part of the ribosomal stalk which helps the ribosome interact with GTP-bound translation factors. Is thus essential for accurate translation. This Limosilactobacillus fermentum (strain NBRC 3956 / LMG 18251) (Lactobacillus fermentum) protein is Large ribosomal subunit protein bL12.